We begin with the raw amino-acid sequence, 36 residues long: Defensin-like turtle egg white protein TEWP (36 aa).

Gln1 is subject to Pyrrolidone carboxylic acid. 3 disulfide bridges follow: Cys4–Cys30, Cys8–Cys29, and Cys12–Cys24.

It belongs to the beta-defensin family. As to quaternary structure, monomer. Detected in egg white (at protein level).

It localises to the secreted. Antibacterial and antiviral peptide. Has strong inhibitory activity towards E.coli and S.typhimurium. Has significant antiviral activity against Chandipura virus. This Caretta caretta (Loggerhead sea turtle) protein is Defensin-like turtle egg white protein TEWP.